A 79-amino-acid chain; its full sequence is MSDIEQRVKKIVAEQLGVAEADIKIESSFVDDLGADSLDTVELVMALEDEFEMEIPDEQAEKITTVQQAIDYAKAHVKA.

The 76-residue stretch at 2–77 (SDIEQRVKKI…QAIDYAKAHV (76 aa)) folds into the Carrier domain. At S37 the chain carries O-(pantetheine 4'-phosphoryl)serine.

Belongs to the acyl carrier protein (ACP) family. Post-translationally, 4'-phosphopantetheine is transferred from CoA to a specific serine of apo-ACP by AcpS. This modification is essential for activity because fatty acids are bound in thioester linkage to the sulfhydryl of the prosthetic group.

It localises to the cytoplasm. Its pathway is lipid metabolism; fatty acid biosynthesis. Functionally, carrier of the growing fatty acid chain in fatty acid biosynthesis. The protein is Acyl carrier protein of Janthinobacterium sp. (strain Marseille) (Minibacterium massiliensis).